The sequence spans 294 residues: Type 4 apparatus protein DotZ (294 aa).

The T4BSS is a complex nanomachine composed of several subcomplexes. This subunit is part of the Type IV Coupling Complex (T4CC), a subcomplex composed of the DotLMNYZ core and the IcmSW-LvgA adapter subunits, linked by the C-terminal tail of DotL. Six DotLMNYZ hetero-pentameric units may assemble into a hexameric nanomachine, forming an inner membrane channel for effectors to pass through. Makes significant contact with DotN and DotY, but engages weakly with DotM and DotL. DotY and DotZ are co-dependent for the assembly into the T4CC.

The protein localises to the cytoplasm. Functionally, component of the Dot/Icm type IVB secretion system (T4BSS), which is used to inject bacterial effector proteins into eukaryotic host cells. Part of a subcomplex which recruits effector proteins and delivers them to the core transmembrane subcomplex. DotY and DotZ play a role in effector translocation, but are not essential and do not influence the stability of the subcomplex main components. The DotY/DotZ main function is to optimize secretion by modulating the delivery trajectory of the IcmSW module and the localization of the machinery to the poles. The sequence is that of Type 4 apparatus protein DotZ from Legionella pneumophila subsp. pneumophila (strain Philadelphia 1 / ATCC 33152 / DSM 7513).